The following is a 364-amino-acid chain: Programmed cell death protein 2-like (364 aa).

Alanine 2 carries the post-translational modification N-acetylalanine. Residues 125–150 (EGSQDWGSDTEETPPPPASDLGSDSN) form a disordered region.

Functionally, over-expression suppresses AP1, CREB, NFAT, and NF-kB transcriptional activation, and delays cell cycle progression at S phase. This chain is Programmed cell death protein 2-like (Pdcd2l), found in Mus musculus (Mouse).